Consider the following 269-residue polypeptide: Diaminopimelate epimerase (269 aa).

Asn20 and Asn63 together coordinate substrate. Cys72 functions as the Proton donor in the catalytic mechanism. Residues Gly73–Asn74, Asn179, and Glu197–Arg198 contribute to the substrate site. The active-site Proton acceptor is the Cys207. Gly208–Thr209 serves as a coordination point for substrate.

This sequence belongs to the diaminopimelate epimerase family. Homodimer.

Its subcellular location is the cytoplasm. The catalysed reaction is (2S,6S)-2,6-diaminopimelate = meso-2,6-diaminopimelate. It participates in amino-acid biosynthesis; L-lysine biosynthesis via DAP pathway; DL-2,6-diaminopimelate from LL-2,6-diaminopimelate: step 1/1. In terms of biological role, catalyzes the stereoinversion of LL-2,6-diaminopimelate (L,L-DAP) to meso-diaminopimelate (meso-DAP), a precursor of L-lysine and an essential component of the bacterial peptidoglycan. The chain is Diaminopimelate epimerase from Chlamydia muridarum (strain MoPn / Nigg).